The chain runs to 191 residues: Leucyl/phenylalanyl-tRNA--protein transferase (191 aa).

Belongs to the L/F-transferase family.

The protein localises to the cytoplasm. It catalyses the reaction N-terminal L-lysyl-[protein] + L-leucyl-tRNA(Leu) = N-terminal L-leucyl-L-lysyl-[protein] + tRNA(Leu) + H(+). It carries out the reaction N-terminal L-arginyl-[protein] + L-leucyl-tRNA(Leu) = N-terminal L-leucyl-L-arginyl-[protein] + tRNA(Leu) + H(+). The catalysed reaction is L-phenylalanyl-tRNA(Phe) + an N-terminal L-alpha-aminoacyl-[protein] = an N-terminal L-phenylalanyl-L-alpha-aminoacyl-[protein] + tRNA(Phe). Its function is as follows. Functions in the N-end rule pathway of protein degradation where it conjugates Leu, Phe and, less efficiently, Met from aminoacyl-tRNAs to the N-termini of proteins containing an N-terminal arginine or lysine. This Nostoc punctiforme (strain ATCC 29133 / PCC 73102) protein is Leucyl/phenylalanyl-tRNA--protein transferase.